The sequence spans 309 residues: Sulfate adenylyltransferase subunit 2 (309 aa).

This sequence belongs to the PAPS reductase family. CysD subfamily. Heterodimer composed of CysD, the smaller subunit, and CysN.

The enzyme catalyses sulfate + ATP + H(+) = adenosine 5'-phosphosulfate + diphosphate. Its pathway is sulfur metabolism; hydrogen sulfide biosynthesis; sulfite from sulfate: step 1/3. Its function is as follows. With CysN forms the ATP sulfurylase (ATPS) that catalyzes the adenylation of sulfate producing adenosine 5'-phosphosulfate (APS) and diphosphate, the first enzymatic step in sulfur assimilation pathway. APS synthesis involves the formation of a high-energy phosphoric-sulfuric acid anhydride bond driven by GTP hydrolysis by CysN coupled to ATP hydrolysis by CysD. This is Sulfate adenylyltransferase subunit 2 from Mycolicibacterium gilvum (strain PYR-GCK) (Mycobacterium gilvum (strain PYR-GCK)).